The chain runs to 696 residues: Glycine--tRNA ligase beta subunit (696 aa).

It belongs to the class-II aminoacyl-tRNA synthetase family. In terms of assembly, tetramer of two alpha and two beta subunits.

It is found in the cytoplasm. It carries out the reaction tRNA(Gly) + glycine + ATP = glycyl-tRNA(Gly) + AMP + diphosphate. The chain is Glycine--tRNA ligase beta subunit from Aromatoleum aromaticum (strain DSM 19018 / LMG 30748 / EbN1) (Azoarcus sp. (strain EbN1)).